We begin with the raw amino-acid sequence, 305 residues long: Cytochrome c biogenesis protein CcsA (305 aa).

Transmembrane regions (helical) follow at residues 4 to 24 (VLGLGLFAFALLLLALPLAFW), 32 to 52 (SGLVTLLIATANLALTAQLVL), 58 to 78 (GHFPISNLYESLCFLAWACTL), 91 to 111 (IVAAAATPMGLGCIAFASFAL), 136 to 156 (VIMVSYAALLVGSLLSVAVLV), 212 to 232 (TITVGFLLLTVGIISGAVWAN), 246 to 263 (TWALICWLVYAAYLHTRL), and 275 to 295 (VASAGLVVIGVCYIGVNLLGI).

Belongs to the CcmF/CycK/Ccl1/NrfE/CcsA family. As to quaternary structure, may interact with ccs1.

The protein localises to the cellular thylakoid membrane. Required during biogenesis of c-type cytochromes (cytochrome c6 and cytochrome f) at the step of heme attachment. The protein is Cytochrome c biogenesis protein CcsA of Synechococcus sp. (strain CC9311).